The following is a 142-amino-acid chain: Large-conductance mechanosensitive channel (142 aa).

A run of 3 helical transmembrane segments spans residues 14 to 34 (VVDLAVGVIIGAAFGAIVNSL), 38 to 58 (VIMPIIGAITGGLDFSNYYIP), and 82 to 102 (GQFLTLAVNFTIIAFVLFMVI).

It belongs to the MscL family. In terms of assembly, homopentamer.

Its subcellular location is the cell inner membrane. Channel that opens in response to stretch forces in the membrane lipid bilayer. May participate in the regulation of osmotic pressure changes within the cell. This chain is Large-conductance mechanosensitive channel, found in Methylorubrum populi (strain ATCC BAA-705 / NCIMB 13946 / BJ001) (Methylobacterium populi).